Reading from the N-terminus, the 166-residue chain is MTEPSSRRSGYARLLDRAIRILAMRDHSEQELRRKLAAPVMSKNGPEALDVTPEELEQVVAWCIENRYLDDHRFVGQFIASRSRKGYGPARIRQELSQKGIARQDVEQAMRECDIDWVSLAREQAQRKYGEPLPSAFTEKVKVQRFLLYRGYLMEDIQEIWRNFAD.

It belongs to the RecX family.

It is found in the cytoplasm. Its function is as follows. Modulates RecA activity. This is Regulatory protein RecX from Klebsiella pneumoniae (strain 342).